The sequence spans 583 residues: Threonine--tRNA ligase (583 aa).

Residues 185–478 (DHRKLGRELD…LVEHYGGAFP (294 aa)) form a catalytic region. Zn(2+) contacts are provided by Cys-278, His-329, and His-455.

The protein belongs to the class-II aminoacyl-tRNA synthetase family. As to quaternary structure, homodimer. The cofactor is Zn(2+).

Its subcellular location is the cytoplasm. It catalyses the reaction tRNA(Thr) + L-threonine + ATP = L-threonyl-tRNA(Thr) + AMP + diphosphate + H(+). Catalyzes the attachment of threonine to tRNA(Thr) in a two-step reaction: L-threonine is first activated by ATP to form Thr-AMP and then transferred to the acceptor end of tRNA(Thr). Also edits incorrectly charged L-seryl-tRNA(Thr). This Borrelia hermsii (strain HS1 / DAH) protein is Threonine--tRNA ligase.